A 296-amino-acid chain; its full sequence is Light-independent protochlorophyllide reductase iron-sulfur ATP-binding protein (296 aa).

Residues 39 to 44 and Lys68 contribute to the ATP site; that span reads GIGKST. Ser43 contacts Mg(2+). [4Fe-4S] cluster-binding residues include Cys124 and Cys158. 209–210 is an ATP binding site; that stretch reads NR.

The protein belongs to the NifH/BchL/ChlL family. In terms of assembly, homodimer. Protochlorophyllide reductase is composed of three subunits; ChlL, ChlN and ChlB. [4Fe-4S] cluster serves as cofactor.

The catalysed reaction is chlorophyllide a + oxidized 2[4Fe-4S]-[ferredoxin] + 2 ADP + 2 phosphate = protochlorophyllide a + reduced 2[4Fe-4S]-[ferredoxin] + 2 ATP + 2 H2O. It participates in porphyrin-containing compound metabolism; chlorophyll biosynthesis (light-independent). Component of the dark-operative protochlorophyllide reductase (DPOR) that uses Mg-ATP and reduced ferredoxin to reduce ring D of protochlorophyllide (Pchlide) to form chlorophyllide a (Chlide). This reaction is light-independent. The L component serves as a unique electron donor to the NB-component of the complex, and binds Mg-ATP. In Synechococcus sp. (strain CC9605), this protein is Light-independent protochlorophyllide reductase iron-sulfur ATP-binding protein.